Reading from the N-terminus, the 505-residue chain is 2,3-bisphosphoglycerate-independent phosphoglycerate mutase (505 aa).

Asp-11 and Ser-61 together coordinate Mn(2+). Residue Ser-61 is the Phosphoserine intermediate of the active site. Residues His-122, 152 to 153 (RD), Arg-184, Arg-190, 258 to 261 (RPDR), and Lys-331 contribute to the substrate site. Positions 396, 400, 437, 438, and 455 each coordinate Mn(2+).

It belongs to the BPG-independent phosphoglycerate mutase family. As to quaternary structure, monomer. Requires Mn(2+) as cofactor.

It catalyses the reaction (2R)-2-phosphoglycerate = (2R)-3-phosphoglycerate. Its pathway is carbohydrate degradation; glycolysis; pyruvate from D-glyceraldehyde 3-phosphate: step 3/5. Functionally, catalyzes the interconversion of 2-phosphoglycerate and 3-phosphoglycerate. This Mesomycoplasma hyopneumoniae (strain 7448) (Mycoplasma hyopneumoniae) protein is 2,3-bisphosphoglycerate-independent phosphoglycerate mutase.